Here is a 161-residue protein sequence, read N- to C-terminus: NADH:FMN oxidoreductase (161 aa).

FMN is bound by residues D30, 37–40 (AAST), 54–61 (CVQNSSTT), A88, R94, and F151.

Belongs to the non-flavoprotein flavin reductase family.

It localises to the cytoplasm. The catalysed reaction is FMNH2 + NAD(+) = FMN + NADH + 2 H(+). The enzyme catalyses FADH2 + NAD(+) = FAD + NADH + 2 H(+). It participates in sulfur metabolism; dibenzothiophene degradation. An NADH:FMN oxidoreductase which supplies reduced FMN for the '4S' desulfurization pathway that removes covalently bound sulfur from dibenzothiophene (DBT) without breaking carbon-carbon bonds. Can also use FAD. Provides DszC and probably also DszA (DBT-monooxygenase and DBTO2-monooxygenase respectively) with reduced flavin (FMN and/or FAD). The protein is NADH:FMN oxidoreductase of Mycolicibacterium goodii (Mycobacterium goodii).